Consider the following 437-residue polypeptide: Isthmin-2 (437 aa).

An N-terminal signal peptide occupies residues 1-25; it reads MLRARKGLWVLLSVLLAFWIERAIS. The segment at 156–191 is disordered; it reads DSGEDGTGQAEDEEDDYDYDSGEPIPSGLGKTDGDW. Residues 165–176 show a composition bias toward acidic residues; the sequence is AEDEEDDYDYDS. The 46-residue stretch at 197 to 242 folds into the TSP type-1 domain; the sequence is EEKEEEWSTWSPCSVTCGHGNQTRSRSCGDFCTSTESQSCDLVPCP. 3 disulfides stabilise this stretch: Cys209–Cys236, Cys213–Cys241, and Cys224–Cys228. Asn217 is a glycosylation site (N-linked (GlcNAc...) asparagine). N-linked (GlcNAc...) asparagine glycans are attached at residues Asn258 and Asn349. One can recognise an AMOP domain in the interval 262–425; the sequence is PYGTDVGSCE…LHCMENPQQD (164 aa).

Belongs to the isthmin family.

It is found in the secreted. The chain is Isthmin-2 (ism2) from Danio rerio (Zebrafish).